Here is a 380-residue protein sequence, read N- to C-terminus: Putative zinc finger protein C02F5.12 (380 aa).

The segment at 137-187 (NLDIPGTSSDIPSDPSSALKVPKKEVLDESEEILDQTSGSSSFSLNDSEQA) is disordered. Polar residues-rich tracts occupy residues 142-152 (GTSSDIPSDPS) and 171-187 (DQTS…SEQA). The C2H2-type zinc finger occupies 271–294 (IPCKLCGFECTNVRRMRSHYAKAH).

The protein resides in the nucleus. The polypeptide is Putative zinc finger protein C02F5.12 (Caenorhabditis elegans).